The following is a 395-amino-acid chain: MRRLFTSESVTEGHPDKICDQISDAILDEILKKDPYARVACETAVTTGLVLVMGEITTECYVDIPRIARDVIRDIGYTRAKYGFDADTCAVITSIDEQSPDIAMGVNKALEARRGELTDAEIEAIGAGDQGLMIGFACDETEELMPMPIMLAHKLARRLAEVRKNGTLSYLRPDGKTQVTVEYEEDRPVRVDSVVVSAQHAPEVDHDTIEKDIIEHVVNVIIPENMMDKNTKIFVNPTGRFVLGGPQADSGLTGRKIIVDTYGGYARHGGGAFSGKDPTKVDRSASYAARYVAKNIVAAGLAKKCEVQVAYAIGVATPLEVEINTFGTGKISDEKISEIVKKVFDLRPAAIIRDLDLRRPIYRQVAAYGHFGRHDLDLPWEKTDRVDILRKLAGI.

Residue H14 coordinates ATP. Residue D16 coordinates Mg(2+). E42 is a binding site for K(+). Residues E55 and Q98 each coordinate L-methionine. Positions 98–108 (QSPDIAMGVNK) are flexible loop. ATP-binding positions include 174-176 (DGK), 240-241 (RF), D249, 255-256 (RK), A272, and K276. L-methionine is bound at residue D249. K280 contacts L-methionine.

The protein belongs to the AdoMet synthase family. Homotetramer; dimer of dimers. The cofactor is Mg(2+). Requires K(+) as cofactor.

It is found in the cytoplasm. It carries out the reaction L-methionine + ATP + H2O = S-adenosyl-L-methionine + phosphate + diphosphate. The protein operates within amino-acid biosynthesis; S-adenosyl-L-methionine biosynthesis; S-adenosyl-L-methionine from L-methionine: step 1/1. Its function is as follows. Catalyzes the formation of S-adenosylmethionine (AdoMet) from methionine and ATP. The overall synthetic reaction is composed of two sequential steps, AdoMet formation and the subsequent tripolyphosphate hydrolysis which occurs prior to release of AdoMet from the enzyme. This is S-adenosylmethionine synthase from Caldanaerobacter subterraneus subsp. tengcongensis (strain DSM 15242 / JCM 11007 / NBRC 100824 / MB4) (Thermoanaerobacter tengcongensis).